The sequence spans 42 residues: MEGLTKFLSTAPVLIMALLTVTAGILIEFNRFYPDLLFHPLG.

The helical transmembrane segment at 7 to 27 (FLSTAPVLIMALLTVTAGILI) threads the bilayer.

This sequence belongs to the PsaJ family.

The protein localises to the cellular thylakoid membrane. In terms of biological role, may help in the organization of the PsaE and PsaF subunits. The sequence is that of Photosystem I reaction center subunit IX from Crocosphaera subtropica (strain ATCC 51142 / BH68) (Cyanothece sp. (strain ATCC 51142)).